The primary structure comprises 26 residues: Aldehyde dehydrogenase beta chain (26 aa).

In terms of assembly, heterotrimer composed of an alpha, a beta and a gamma chain. It depends on FAD as a cofactor.

It catalyses the reaction an aldehyde + a quinone + H2O = a quinol + a carboxylate + H(+). The sequence is that of Aldehyde dehydrogenase beta chain from Amycolatopsis methanolica.